Consider the following 139-residue polypeptide: SPbeta prophage-derived uncharacterized protein YomN (139 aa).

The polypeptide is SPbeta prophage-derived uncharacterized protein YomN (yomN) (Bacillus subtilis (strain 168)).